Reading from the N-terminus, the 419-residue chain is KGSTKRANLDPLFEKYISDLKRYLDNLINEKGRLQQELRTLQDLVEDFKKKYEDEINKRTKAENDFVVLKKDVDAAYMIKTELEAKVDTLTSEINFFRTLFAAELSQVHDQVTDTSVVLTMDNNRDLNLDSIIKEVKCQYEQIAQRSKLEAEALYDQRYKQLQQTVEGHGDSIKNSKTEISDLNLKIQRLKAEIENVKKQIAFLNQSIAGAEERGNLALKDAERKLKDLEDAERKLKADMARQLKEYQELMSAKLALNLEISTYRYMLEGEEGRMSGQISNNVSISVISGGSSVYTALGGAAGGMGGGGGMGGGMGGGMGMGGGMGMGGGMGMGGGMGMGGGMGGGMGMGGGMGMGGGMGMGDGMGSGHGGGYGNEACFGGGMGYEGGSMHGGGSSYGHSGGKTSVAIASTTSTTKRSY.

Positions 1–16 (KGSTKRANLDPLFEKY) are linker 1. Residues 1 to 275 (KGSTKRANLD…YMLEGEEGRM (275 aa)) enclose the IF rod domain. A coil 1B region spans residues 17–108 (ISDLKRYLDN…TLFAAELSQV (92 aa)). The linker 12 stretch occupies residues 109–132 (HDQVTDTSVVLTMDNNRDLNLDSI). A coil 2 region spans residues 133–271 (IKEVKCQYEQ…STYRYMLEGE (139 aa)). The segment at 272–419 (EGRMSGQISN…STTSTTKRSY (148 aa)) is tail.

It belongs to the intermediate filament family. Heterotetramer of two type I and two type II keratins.

The sequence is that of Keratin, type II cytoskeletal I from Xenopus laevis (African clawed frog).